The chain runs to 896 residues: Serine/threonine-protein kinase TAO3 (896 aa).

In terms of domain architecture, Protein kinase spans Phe24 to Val277. Residues Ile30–Val38 and Lys53 contribute to the ATP site. The Proton acceptor role is filled by Asp147. Disordered regions lie at residues Ser316–Ser366 and Asp403–Gln423. The span at Gly334–His348 shows a compositional bias: polar residues. Low complexity predominate over residues Ser349–Ser366. Over residues Asp403 to Leu414 the composition is skewed to basic and acidic residues. Coiled-coil stretches lie at residues Glu450–Gln513, Ser545–Gln650, and Leu752–Phe873. Residues Leu565–Leu587 are compositionally biased toward basic and acidic residues. A disordered region spans residues Leu565 to Glu593.

Belongs to the protein kinase superfamily. STE Ser/Thr protein kinase family. STE20 subfamily.

Its subcellular location is the cytoplasm. The protein localises to the cell membrane. The protein resides in the membrane raft. It localises to the lipid droplet. It catalyses the reaction L-seryl-[protein] + ATP = O-phospho-L-seryl-[protein] + ADP + H(+). It carries out the reaction L-threonyl-[protein] + ATP = O-phospho-L-threonyl-[protein] + ADP + H(+). Its function is as follows. Serine/threonine-protein kinase that acts as a regulator of the p38/MAPK14 stress-activated MAPK cascade and of the MAPK8/JNK cascade. In response to DNA damage, involved in the G2/M transition DNA damage checkpoint by activating the p38/MAPK14 stress-activated MAPK cascade, probably by mediating phosphorylation of upstream MAP kinase kinases. Inhibits basal activity of the MAPK8/JNK cascade. This chain is Serine/threonine-protein kinase TAO3 (taok3), found in Xenopus laevis (African clawed frog).